Here is a 619-residue protein sequence, read N- to C-terminus: Translation initiation factor IF-2 (619 aa).

Low complexity-rich tracts occupy residues 1 to 18 (MTLN…TTPK) and 98 to 111 (PPQL…LTKT). 2 disordered regions span residues 1–24 (MTLN…KETD) and 90–113 (SEPQ…KTKP). The tr-type G domain maps to 121–289 (KKSPIVTIMG…ILLVSEIQNL (169 aa)). The interval 130–137 (GHVDHGKT) is G1. A GTP-binding site is contributed by 130–137 (GHVDHGKT). The segment at 155-159 (GITQH) is G2. Residues 176–179 (DTPG) are G3. GTP contacts are provided by residues 176 to 180 (DTPGH) and 230 to 233 (NKID). The tract at residues 230 to 233 (NKID) is G4. The G5 stretch occupies residues 266 to 268 (SAL).

This sequence belongs to the TRAFAC class translation factor GTPase superfamily. Classic translation factor GTPase family. IF-2 subfamily.

The protein resides in the cytoplasm. Functionally, one of the essential components for the initiation of protein synthesis. Protects formylmethionyl-tRNA from spontaneous hydrolysis and promotes its binding to the 30S ribosomal subunits. Also involved in the hydrolysis of GTP during the formation of the 70S ribosomal complex. The protein is Translation initiation factor IF-2 of Onion yellows phytoplasma (strain OY-M).